Consider the following 353-residue polypeptide: Probable peptide ABC transporter ATP-binding protein y4tS (353 aa).

One can recognise an ABC transporter domain in the interval 6–256 (LKVESLTKHY…PVHPYTEALI (251 aa)). Residue 49 to 56 (GESGCGKS) participates in ATP binding.

The protein belongs to the ABC transporter superfamily.

Its subcellular location is the cell inner membrane. Functionally, probably part of a binding-protein-dependent transport system y4tOPQRS for a peptide. Probably responsible for energy coupling to the transport system. The protein is Probable peptide ABC transporter ATP-binding protein y4tS of Sinorhizobium fredii (strain NBRC 101917 / NGR234).